Reading from the N-terminus, the 725-residue chain is Beta-adducin (725 aa).

The tract at residues 1–22 (MSEDTVPEAASPPPSQGQHYFD) is disordered. 2 positions are modified to phosphoserine: serine 11 and serine 25. Threonine 55 carries the phosphothreonine modification. Residues serine 60 and serine 344 each carry the phosphoserine modification. Residues 425–444 (KQQKEKTRWLNTPNTYLRVN) form an interaction with calmodulin region. Residues 525 to 725 (AEKSRSPSTE…KSKKKEKVES (201 aa)) are disordered. Residues serine 530 and serine 532 each carry the phosphoserine modification. Residue threonine 533 is modified to Phosphothreonine. Serine 535 bears the Phosphoserine mark. Residue threonine 561 is modified to Phosphothreonine. A compositionally biased stretch (basic and acidic residues) spans 566–589 (EEYKKEVERKKLEQEQEGEKDIAT). Phosphoserine is present on residues serine 594, serine 598, serine 602, and serine 606. A compositionally biased stretch (polar residues) spans 596–621 (VKSTPASPVQSPSKAGTKSPAVSPSK). A Phosphothreonine modification is found at threonine 612. Phosphoserine is present on residues serine 614, serine 618, and serine 620. Positions 622-631 (TSEDTKKTEV) are enriched in basic and acidic residues. Residue threonine 674 is modified to Phosphothreonine. Phosphoserine is present on residues serine 678, serine 685, serine 688, serine 692, serine 696, serine 698, serine 700, serine 702, and serine 712. Low complexity predominate over residues 687-700 (TSGPLSPEGSPSKS). Residues 701–725 (PSKKKKKFRTPSFLKKSKKKEKVES) are compositionally biased toward basic residues. Positions 703–720 (KKKKKFRTPSFLKKSKKK) are interaction with calmodulin.

It belongs to the aldolase class II family. Adducin subfamily. Found in a complex with ADD2, DMTN and SLC2A1. Interacts with SLC2A1. Heterodimer of an alpha and a beta subunit.

The protein resides in the cytoplasm. Its subcellular location is the cytoskeleton. It is found in the cell membrane. Its function is as follows. Membrane-cytoskeleton-associated protein that promotes the assembly of the spectrin-actin network. Binds to the erythrocyte membrane receptor SLC2A1/GLUT1 and may therefore provide a link between the spectrin cytoskeleton to the plasma membrane. Binds to calmodulin. Calmodulin binds preferentially to the beta subunit. The chain is Beta-adducin (Add2) from Mus musculus (Mouse).